The chain runs to 216 residues: Ribosomal RNA large subunit methyltransferase E (216 aa).

Positions 60, 62, 80, 96, and 121 each coordinate S-adenosyl-L-methionine. Lys-161 serves as the catalytic Proton acceptor.

It belongs to the class I-like SAM-binding methyltransferase superfamily. RNA methyltransferase RlmE family.

The protein resides in the cytoplasm. The catalysed reaction is uridine(2552) in 23S rRNA + S-adenosyl-L-methionine = 2'-O-methyluridine(2552) in 23S rRNA + S-adenosyl-L-homocysteine + H(+). Functionally, specifically methylates the uridine in position 2552 of 23S rRNA at the 2'-O position of the ribose in the fully assembled 50S ribosomal subunit. The protein is Ribosomal RNA large subunit methyltransferase E of Pseudomonas savastanoi pv. phaseolicola (strain 1448A / Race 6) (Pseudomonas syringae pv. phaseolicola (strain 1448A / Race 6)).